The chain runs to 713 residues: Phosphoribosylformylglycinamidine synthase subunit PurL (713 aa).

His32 is a catalytic residue. Residue Tyr35 participates in ATP binding. Glu76 contributes to the Mg(2+) binding site. Substrate-binding positions include 77 to 80 (SHNH) and Arg99. The Proton acceptor role is filled by His78. Asp100 serves as a coordination point for Mg(2+). Gln224 contacts substrate. Asp252 is a binding site for Mg(2+). Residue 296–298 (ESQ) participates in substrate binding. Asp471 and Gly508 together coordinate ATP. Asn509 provides a ligand contact to Mg(2+). Residue Ser511 participates in substrate binding.

The protein belongs to the FGAMS family. Monomer. Part of the FGAM synthase complex composed of 1 PurL, 1 PurQ and 2 PurS subunits.

It localises to the cytoplasm. It carries out the reaction N(2)-formyl-N(1)-(5-phospho-beta-D-ribosyl)glycinamide + L-glutamine + ATP + H2O = 2-formamido-N(1)-(5-O-phospho-beta-D-ribosyl)acetamidine + L-glutamate + ADP + phosphate + H(+). It participates in purine metabolism; IMP biosynthesis via de novo pathway; 5-amino-1-(5-phospho-D-ribosyl)imidazole from N(2)-formyl-N(1)-(5-phospho-D-ribosyl)glycinamide: step 1/2. In terms of biological role, part of the phosphoribosylformylglycinamidine synthase complex involved in the purines biosynthetic pathway. Catalyzes the ATP-dependent conversion of formylglycinamide ribonucleotide (FGAR) and glutamine to yield formylglycinamidine ribonucleotide (FGAM) and glutamate. The FGAM synthase complex is composed of three subunits. PurQ produces an ammonia molecule by converting glutamine to glutamate. PurL transfers the ammonia molecule to FGAR to form FGAM in an ATP-dependent manner. PurS interacts with PurQ and PurL and is thought to assist in the transfer of the ammonia molecule from PurQ to PurL. The polypeptide is Phosphoribosylformylglycinamidine synthase subunit PurL (Thermococcus kodakarensis (strain ATCC BAA-918 / JCM 12380 / KOD1) (Pyrococcus kodakaraensis (strain KOD1))).